The primary structure comprises 867 residues: Putative ubiquitin thioesterase L96 (867 aa).

Disordered regions lie at residues 49–73, 177–204, 231–271, and 379–591; these read VNQY…GKQD, IKSV…MKKK, YILS…PKYR, and LSTQ…YKGG. 2 stretches are compositionally biased toward basic residues: residues 234 to 258 and 421 to 430; these read SRKK…RSPG and KITRKPKSPR. Low complexity-rich tracts occupy residues 433–462 and 472–551; these read PPAS…SVRA and PPSS…KSPS. Over residues 565-575 the composition is skewed to polar residues; that stretch reads ITVDPSVTPPS. Positions 582 to 591 are enriched in basic and acidic residues; the sequence is RPELPEYKGG. One can recognise an OTU domain in the interval 606–745; sequence YKVIPVKGDG…DYHYTALTPL (140 aa). D614 is an active-site residue. C617 acts as the Nucleophile in catalysis. The active site involves H738.

The enzyme catalyses Thiol-dependent hydrolysis of ester, thioester, amide, peptide and isopeptide bonds formed by the C-terminal Gly of ubiquitin (a 76-residue protein attached to proteins as an intracellular targeting signal).. Hydrolase that can remove conjugated ubiquitin from proteins and may therefore play an important regulatory role at the level of protein turnover by preventing degradation. May be involved in TIV genomic DNA packaging in a manner related to the Gag polyproteins of the mammalian viruses. The sequence is that of Putative ubiquitin thioesterase L96 from Tipula iridescent virus (TIV).